The primary structure comprises 192 residues: Peptidyl-tRNA hydrolase (192 aa).

Tyrosine 17 contributes to the tRNA binding site. Catalysis depends on histidine 22, which acts as the Proton acceptor. 3 residues coordinate tRNA: phenylalanine 68, asparagine 70, and asparagine 116.

This sequence belongs to the PTH family. In terms of assembly, monomer.

It localises to the cytoplasm. The catalysed reaction is an N-acyl-L-alpha-aminoacyl-tRNA + H2O = an N-acyl-L-amino acid + a tRNA + H(+). Functionally, hydrolyzes ribosome-free peptidyl-tRNAs (with 1 or more amino acids incorporated), which drop off the ribosome during protein synthesis, or as a result of ribosome stalling. In terms of biological role, catalyzes the release of premature peptidyl moieties from peptidyl-tRNA molecules trapped in stalled 50S ribosomal subunits, and thus maintains levels of free tRNAs and 50S ribosomes. In Xylella fastidiosa (strain M12), this protein is Peptidyl-tRNA hydrolase.